A 425-amino-acid polypeptide reads, in one-letter code: MQIYMVGGAVRDRLLGRPVNDHDWVVVGATPDDMVARGYLPVGRDFPVFLHPETREEYALARTERKSGRGYRGFVVQTSPDVTLEEDLSRRDLTINAIAASADWTGAEDLFDPYGGARDLQARVLRHVTDSFREDPVRILRVARFAARFTDFTVAPETMQLMREMVHDGEADHLVPERVWQELARGLMEPQPSRMFDVLRDCGALAVVLPEVERLWGVPQRPEYHPEVDTGVHLMMVLDMAAHLQAPLTVRFACLTHDLGKGTTPHDVLPRHIGHEQRSARLLKAVCERLRVPVECRELADVVAREHGNIHRSGDLGAAALVRLLERCDAIRKPARLDEILLACECDARGRLGFADRPYPQRARINAALAAVQSVTTSSVAAHAAQLGLSGPKVGEMIHAARVQAVADWLHATAQPAPEPRGNAG.

Gly-8 and Arg-11 together coordinate ATP. Residues Gly-8 and Arg-11 each coordinate CTP. The Mg(2+) site is built by Asp-21 and Asp-23. Residues Arg-91, Arg-141, and Arg-144 each contribute to the ATP site. 3 residues coordinate CTP: Arg-91, Arg-141, and Arg-144. Residues 230–331 enclose the HD domain; it reads TGVHLMMVLD…VRLLERCDAI (102 aa).

This sequence belongs to the tRNA nucleotidyltransferase/poly(A) polymerase family. Bacterial CCA-adding enzyme type 1 subfamily. In terms of assembly, monomer. Can also form homodimers and oligomers. It depends on Mg(2+) as a cofactor. The cofactor is Ni(2+).

The enzyme catalyses a tRNA precursor + 2 CTP + ATP = a tRNA with a 3' CCA end + 3 diphosphate. It carries out the reaction a tRNA with a 3' CCA end + 2 CTP + ATP = a tRNA with a 3' CCACCA end + 3 diphosphate. Functionally, catalyzes the addition and repair of the essential 3'-terminal CCA sequence in tRNAs without using a nucleic acid template. Adds these three nucleotides in the order of C, C, and A to the tRNA nucleotide-73, using CTP and ATP as substrates and producing inorganic pyrophosphate. tRNA 3'-terminal CCA addition is required both for tRNA processing and repair. Also involved in tRNA surveillance by mediating tandem CCA addition to generate a CCACCA at the 3' terminus of unstable tRNAs. While stable tRNAs receive only 3'-terminal CCA, unstable tRNAs are marked with CCACCA and rapidly degraded. The chain is Multifunctional CCA protein from Acidovorax ebreus (strain TPSY) (Diaphorobacter sp. (strain TPSY)).